A 388-amino-acid polypeptide reads, in one-letter code: Formate-dependent phosphoribosylglycinamide formyltransferase (388 aa).

N(1)-(5-phospho-beta-D-ribosyl)glycinamide-binding positions include 21–22 (EL) and Glu81. Residues Arg113, Lys154, 159-164 (SSGHGQ), 193-196 (EEFI), and Glu201 each bind ATP. Residues 118 to 306 (KFAAEELGLK…EFALHVRAVL (189 aa)) enclose the ATP-grasp domain. Residues Glu265 and Glu277 each contribute to the Mg(2+) site. Residues Asp284, Lys352, and 359 to 360 (RR) each bind N(1)-(5-phospho-beta-D-ribosyl)glycinamide.

It belongs to the PurK/PurT family. Homodimer.

It carries out the reaction N(1)-(5-phospho-beta-D-ribosyl)glycinamide + formate + ATP = N(2)-formyl-N(1)-(5-phospho-beta-D-ribosyl)glycinamide + ADP + phosphate + H(+). The protein operates within purine metabolism; IMP biosynthesis via de novo pathway; N(2)-formyl-N(1)-(5-phospho-D-ribosyl)glycinamide from N(1)-(5-phospho-D-ribosyl)glycinamide (formate route): step 1/1. In terms of biological role, involved in the de novo purine biosynthesis. Catalyzes the transfer of formate to 5-phospho-ribosyl-glycinamide (GAR), producing 5-phospho-ribosyl-N-formylglycinamide (FGAR). Formate is provided by PurU via hydrolysis of 10-formyl-tetrahydrofolate. The protein is Formate-dependent phosphoribosylglycinamide formyltransferase of Nitratiruptor sp. (strain SB155-2).